The sequence spans 518 residues: Cell wall biosynthesis protein LcpA (518 aa).

Residues 1–31 (MTEKYRPVRDIKPAPAAMQSTKQAGHPVFRS) are Cytoplasmic-facing. The helical transmembrane segment at 32–52 (VVAFVSVLVLLVSGLGYLAVG) threads the bilayer. Topologically, residues 53 to 518 (KVDGVASGNL…AGGDGPRCVN (466 aa)) are periplasmic. The disordered stretch occupies residues 485-518 (AVTSSTVGQPGADVGEPIESPEFDAGGDGPRCVN).

Belongs to the LytR/CpsA/Psr (LCP) family. Forms homodimers and homotetramers.

It is found in the cell inner membrane. Functionally, involved in cell wall biosynthesis. May be responsible for the transfer of arabinogalactan onto peptidoglycan. In vitro, has pyrophosphatase activity. The sequence is that of Cell wall biosynthesis protein LcpA from Corynebacterium glutamicum (strain ATCC 13032 / DSM 20300 / JCM 1318 / BCRC 11384 / CCUG 27702 / LMG 3730 / NBRC 12168 / NCIMB 10025 / NRRL B-2784 / 534).